The chain runs to 485 residues: Ribulose bisphosphate carboxylase large chain (485 aa).

Asparagine 124 and threonine 174 together coordinate substrate. Catalysis depends on lysine 176, which acts as the Proton acceptor. Lysine 178 contacts substrate. Positions 202, 204, and 205 each coordinate Mg(2+). Lysine 202 is subject to N6-carboxylysine. The Proton acceptor role is filled by histidine 294. Substrate contacts are provided by arginine 295, histidine 327, and serine 379.

The protein belongs to the RuBisCO large chain family. Type I subfamily. Heterohexadecamer of 8 large chains and 8 small chains. Mg(2+) is required as a cofactor.

The catalysed reaction is 2 (2R)-3-phosphoglycerate + 2 H(+) = D-ribulose 1,5-bisphosphate + CO2 + H2O. The enzyme catalyses D-ribulose 1,5-bisphosphate + O2 = 2-phosphoglycolate + (2R)-3-phosphoglycerate + 2 H(+). RuBisCO catalyzes two reactions: the carboxylation of D-ribulose 1,5-bisphosphate, the primary event in carbon dioxide fixation, as well as the oxidative fragmentation of the pentose substrate. Both reactions occur simultaneously and in competition at the same active site. The sequence is that of Ribulose bisphosphate carboxylase large chain from Rhodopseudomonas palustris (strain BisA53).